Here is a 420-residue protein sequence, read N- to C-terminus: Putative polyketide beta-ketoacyl synthase 1 (420 aa).

In terms of domain architecture, Ketosynthase family 3 (KS3) spans 3-414; it reads QRRVAITGIE…GFQSAMVLTS (412 aa). Catalysis depends on for beta-ketoacyl synthase activity residues Cys169, His307, and His344.

Belongs to the thiolase-like superfamily. Beta-ketoacyl-ACP synthases family.

It participates in antifungal biosynthesis; monensin biosynthesis. This is Putative polyketide beta-ketoacyl synthase 1 from Streptomyces virginiae (Streptomyces cinnamonensis).